Here is a 513-residue protein sequence, read N- to C-terminus: MSDKLIIFDTTLRDGEQSPGASMTREEKIRIAKQLERLKVDVIEAGFAASSNGDYEAIRSIAQVVKDSTICSLARANDKDIARAAEALKPANSFRIHTFIATSALHMEKKLRMTPDQVYEQARLAVRFARQFTDDIEFSPEDGSRSDMDFLCRVLEGVIAEGATTINLPDTVGYAVPEGYADLIRSVRERIPNSDKAVWSVHCHNDLGMAVANSLAAVKLGGARQIECTINGLGERAGNTSLEEVVMAVKTRRDYFNLDVGVDTSQIVPASKLVSQITGFVVQPNKAVVGANAFAHASGIHQDGVLKARDTYEIMRAEDVGWTANKIVLGKLSGRNAFKQRLQELGVELESEAEVNAAFGRFKELADQKAEIFDEDIMAIVSNEAQHDANEHYRFISLSQRSETGERPHARVVFNMDGQEHSGEGEGNGPVDATLHAIESQVNSGAEMVLYSVNAITGGTEAQGEVTVRLSKAGRIVNGVGTDPDIVAASAKAYLAALNKLHDKAVQKINPQI.

The 264-residue stretch at 5 to 268 (LIIFDTTLRD…DVGVDTSQIV (264 aa)) folds into the Pyruvate carboxyltransferase domain. Residues D14, H202, H204, and N239 each contribute to the Mn(2+) site. Positions 394-513 (RFISLSQRSE…KAVQKINPQI (120 aa)) are regulatory domain.

Belongs to the alpha-IPM synthase/homocitrate synthase family. LeuA type 1 subfamily. Homodimer. Mn(2+) is required as a cofactor.

Its subcellular location is the cytoplasm. The catalysed reaction is 3-methyl-2-oxobutanoate + acetyl-CoA + H2O = (2S)-2-isopropylmalate + CoA + H(+). It participates in amino-acid biosynthesis; L-leucine biosynthesis; L-leucine from 3-methyl-2-oxobutanoate: step 1/4. In terms of biological role, catalyzes the condensation of the acetyl group of acetyl-CoA with 3-methyl-2-oxobutanoate (2-ketoisovalerate) to form 3-carboxy-3-hydroxy-4-methylpentanoate (2-isopropylmalate). The chain is 2-isopropylmalate synthase from Cupriavidus pinatubonensis (strain JMP 134 / LMG 1197) (Cupriavidus necator (strain JMP 134)).